A 228-amino-acid chain; its full sequence is MSLSNSLGLLGRKVGMMRLFTDEGDSIPVTVVDVSNNRVTQVKTQENDGYVALQVTFGARKASRVTKPAAGHLAKAGVEAGEIIREFRLTADVAAQYKAGATVPVTAVFAVGQKVDVQGTTIGKGFAGTIKRHHMKSQRASHGNSRSHNVPGSIGMAQDPGRVFPGKRMTGHLGDDTVTTQNLDVIRIDEARQLLMIKGAVPGSAGGFVTVRPAVKVKANNTDVKGAN.

The disordered stretch occupies residues 135-159; that stretch reads MKSQRASHGNSRSHNVPGSIGMAQD. Residues 140–150 show a composition bias toward polar residues; the sequence is ASHGNSRSHNV. Q158 carries the post-translational modification N5-methylglutamine.

The protein belongs to the universal ribosomal protein uL3 family. In terms of assembly, part of the 50S ribosomal subunit. Forms a cluster with proteins L14 and L19. Methylated by PrmB.

In terms of biological role, one of the primary rRNA binding proteins, it binds directly near the 3'-end of the 23S rRNA, where it nucleates assembly of the 50S subunit. The sequence is that of Large ribosomal subunit protein uL3 from Albidiferax ferrireducens (strain ATCC BAA-621 / DSM 15236 / T118) (Rhodoferax ferrireducens).